We begin with the raw amino-acid sequence, 155 residues long: Transmembrane protein C1orf162 (155 aa).

The tract at residues 1 to 28 (MGGNGSTCKPDTERQGTLSTAAPTTSPA) is disordered. The segment covering 19-28 (STAAPTTSPA) has biased composition (low complexity). The helical transmembrane segment at 41–61 (ILAFCAGVLLTLLLIAFIFLI) threads the bilayer. The tract at residues 92–114 (ADHSKPQAPDPHSDPPAKLSSIP) is disordered. Ser140 carries the phosphoserine modification.

The protein resides in the membrane. The polypeptide is Transmembrane protein C1orf162 (C1orf162) (Homo sapiens (Human)).